Consider the following 461-residue polypeptide: Tumor necrosis factor receptor superfamily member 1A (461 aa).

Positions 1–29 (MGLPIVPGLLLSLVLLALLMGIHPSGVTG) are cleaved as a signal peptide. At 30-211 (LVPSLGDREK…VTNPQDSGTA (182 aa)) the chain is on the extracellular side. 4 TNFR-Cys repeats span residues 43–82 (LCPQGKYAHPKNNSICCTKCHKGTYLVSDCPSPGQETVCE), 83–125 (VCDK…DTVC), 126–166 (GCKK…NTVC), and 167–196 (NCHAGFFLSGNECTPCSHCKKNQECMKLCL). Cystine bridges form between C44–C58, C59–C72, C62–C81, C84–C99, C102–C117, C105–C125, C127–C143, C146–C158, C149–C166, C168–C179, C182–C195, and C185–C191. N54 carries an N-linked (GlcNAc...) asparagine glycan. N-linked (GlcNAc...) asparagine glycosylation occurs at N151. A glycan (N-linked (GlcNAc...) asparagine) is linked at N201. The chain crosses the membrane as a helical span at residues 212–234 (VLLPLVIFLGLCLLFFICISLLC). Topologically, residues 235–461 (RYPQWRPRVY…AHSSTTHLPR (227 aa)) are cytoplasmic. The N-SMase activation domain (NSD) stretch occupies residues 344–354 (VRKWEDVVAAQ). Residues 363–448 (PAMLYAVVDG…GCLENIRETL (86 aa)) enclose the Death domain.

Binding of TNF to the extracellular domain leads to homotrimerization. The aggregated death domains provide a novel molecular interface that interacts specifically with the death domain of TRADD. Various TRADD-interacting proteins such as TRAFS, RIPK1 and possibly FADD, are recruited to the complex by their association with TRADD. This complex activates at least two distinct signaling cascades, apoptosis and NF-kappa-B signaling. Interacts with BAG4, BABAM2, FEM1B, GRB2, SQSTM1 and TRPC4AP. Interacts with DAB2IP. Interacts directly with NOL3 (via CARD domain); inhibits TNF-signaling pathway. Interacts with SH3RF2, TRADD and RIPK1. SH3RF2 facilitates the recruitment of RIPK1 and TRADD to TNFRSF1A in a TNF-alpha-dependent process. Interacts with PGLYRP1; this interaction is important for cell death induction. Interacts (via death domain) with MADD (via death domain).

Its subcellular location is the cell membrane. The protein resides in the golgi apparatus membrane. In terms of biological role, receptor for TNFSF2/TNF-alpha and homotrimeric TNFSF1/lymphotoxin-alpha. The adapter molecule FADD recruits caspase-8 to the activated receptor. The resulting death-inducing signaling complex (DISC) performs caspase-8 proteolytic activation which initiates the subsequent cascade of caspases (aspartate-specific cysteine proteases) mediating apoptosis. The polypeptide is Tumor necrosis factor receptor superfamily member 1A (Tnfrsf1a) (Rattus norvegicus (Rat)).